A 936-amino-acid polypeptide reads, in one-letter code: 2-oxoglutarate dehydrogenase E1 component (936 aa).

The protein belongs to the alpha-ketoglutarate dehydrogenase family. In terms of assembly, homodimer. Part of the 2-oxoglutarate dehydrogenase (OGDH) complex composed of E1 (2-oxoglutarate dehydrogenase), E2 (dihydrolipoamide succinyltransferase) and E3 (dihydrolipoamide dehydrogenase); the complex contains multiple copies of the three enzymatic components (E1, E2 and E3). Thiamine diphosphate is required as a cofactor.

The catalysed reaction is N(6)-[(R)-lipoyl]-L-lysyl-[protein] + 2-oxoglutarate + H(+) = N(6)-[(R)-S(8)-succinyldihydrolipoyl]-L-lysyl-[protein] + CO2. Its function is as follows. E1 component of the 2-oxoglutarate dehydrogenase (OGDH) complex which catalyzes the decarboxylation of 2-oxoglutarate, the first step in the conversion of 2-oxoglutarate to succinyl-CoA and CO(2). The polypeptide is 2-oxoglutarate dehydrogenase E1 component (sucA) (Rickettsia prowazekii (strain Madrid E)).